We begin with the raw amino-acid sequence, 183 residues long: Regulatory protein RecX (183 aa).

Polar residues predominate over residues 1–12; that stretch reads MTSFPHPSTSES. Positions 1 to 26 are disordered; sequence MTSFPHPSTSESGPDPDSEPNREEQA.

The protein belongs to the RecX family.

Its subcellular location is the cytoplasm. In terms of biological role, modulates RecA activity. In Mycobacterium sp. (strain JLS), this protein is Regulatory protein RecX.